We begin with the raw amino-acid sequence, 196 residues long: uncharacterized protein (196 aa).

The disordered stretch occupies residues 1–21 (MQPEVEPLISPNLGAPGSHRE).

This is an uncharacterized protein from Mus musculus (Mouse).